We begin with the raw amino-acid sequence, 214 residues long: Ribosomal RNA small subunit methyltransferase G (214 aa).

S-adenosyl-L-methionine is bound by residues Gly-73, Leu-78, 124–125 (VE), and Arg-139.

This sequence belongs to the methyltransferase superfamily. RNA methyltransferase RsmG family.

It localises to the cytoplasm. The enzyme catalyses guanosine(527) in 16S rRNA + S-adenosyl-L-methionine = N(7)-methylguanosine(527) in 16S rRNA + S-adenosyl-L-homocysteine. In terms of biological role, specifically methylates the N7 position of guanine in position 527 of 16S rRNA. The polypeptide is Ribosomal RNA small subunit methyltransferase G (Aeromonas hydrophila subsp. hydrophila (strain ATCC 7966 / DSM 30187 / BCRC 13018 / CCUG 14551 / JCM 1027 / KCTC 2358 / NCIMB 9240 / NCTC 8049)).